The following is a 140-amino-acid chain: Nucleoside diphosphate kinase (140 aa).

ATP is bound by residues Lys-11, Phe-59, Arg-87, Thr-93, Arg-104, and Asn-114. The active-site Pros-phosphohistidine intermediate is His-117.

Belongs to the NDK family. In terms of assembly, homotetramer. The cofactor is Mg(2+).

The protein resides in the cytoplasm. The catalysed reaction is a 2'-deoxyribonucleoside 5'-diphosphate + ATP = a 2'-deoxyribonucleoside 5'-triphosphate + ADP. It catalyses the reaction a ribonucleoside 5'-diphosphate + ATP = a ribonucleoside 5'-triphosphate + ADP. Its function is as follows. Major role in the synthesis of nucleoside triphosphates other than ATP. The ATP gamma phosphate is transferred to the NDP beta phosphate via a ping-pong mechanism, using a phosphorylated active-site intermediate. In Rhizobium etli (strain ATCC 51251 / DSM 11541 / JCM 21823 / NBRC 15573 / CFN 42), this protein is Nucleoside diphosphate kinase.